The following is a 237-amino-acid chain: Oligoribonuclease, mitochondrial (237 aa).

The transit peptide at 1–25 (MLGVSLGARLLRGVGGRRGQFGARG) directs the protein to the mitochondrion. The region spanning 43–207 (MVWVDLEMTG…DDISESIKEL (165 aa)) is the Exonuclease domain. Residues D47 and E49 each coordinate Mg(2+). S92 is modified (phosphoserine). Phosphotyrosine is present on Y122. Residue D147 coordinates Mg(2+). K173 is subject to N6-acetyllysine. The active site involves H194. Mg(2+) is bound at residue D199.

The protein belongs to the oligoribonuclease family. In terms of assembly, homodimer. Homotetramer. Mn(2+) is required as a cofactor. It depends on Mg(2+) as a cofactor.

Its subcellular location is the mitochondrion intermembrane space. The protein resides in the mitochondrion matrix. It is found in the mitochondrion. It localises to the cytoplasm. The protein localises to the nucleus. In terms of biological role, 3'-to-5'exoribonuclease that preferentially degrades DNA and RNA oligonucleotides composed of only two nucleotides. Binds and degrades longer oligonucleotides with a lower affinity. Plays dual roles in mitochondria, scavenging nanoRNAs (small RNA oligonucleotides of &lt;5 nucleotides) that are produced by the degradosome and clearing short RNAs that are generated by RNA processing. Essential for correct initiation of mitochondrial transcription, degrading mitochondrial RNA dinucleotides to prevent RNA-primed transcription at non-canonical sites in the mitochondrial genome. Essential for embryonic development. In Mus musculus (Mouse), this protein is Oligoribonuclease, mitochondrial (Rexo2).